The sequence spans 142 residues: Hemoglobin subunit alpha (142 aa).

The 141-residue stretch at 2–142 folds into the Globin domain; it reads VLSPDDKKHV…VSTVLTSKYR (141 aa). Ser4 bears the Phosphoserine mark. N6-succinyllysine is present on residues Lys8 and Lys12. The residue at position 17 (Lys17) is an N6-acetyllysine; alternate. N6-succinyllysine; alternate is present on Lys17. Tyr25 carries the post-translational modification Phosphotyrosine. The residue at position 36 (Ser36) is a Phosphoserine. An N6-succinyllysine modification is found at Lys41. Residue Ser50 is modified to Phosphoserine. His59 lines the O2 pocket. Heme b is bound at residue His88. Ser103 carries the phosphoserine modification. Thr109 carries the phosphothreonine modification. Ser125 and Ser132 each carry phosphoserine. Thr135 and Thr138 each carry phosphothreonine. Ser139 is modified (phosphoserine).

It belongs to the globin family. Heterotetramer of two alpha chains and two beta chains. Red blood cells.

In terms of biological role, involved in oxygen transport from the lung to the various peripheral tissues. Its function is as follows. Hemopressin acts as an antagonist peptide of the cannabinoid receptor CNR1. Hemopressin-binding efficiently blocks cannabinoid receptor CNR1 and subsequent signaling. This is Hemoglobin subunit alpha (HBA) from Papio anubis (Olive baboon).